The sequence spans 283 residues: Pantothenate synthetase (283 aa).

ATP is bound at residue 30–37 (MGNLHLGH). The active-site Proton donor is histidine 37. Position 61 (glutamine 61) interacts with (R)-pantoate. Glutamine 61 contributes to the beta-alanine binding site. Residue 149 to 152 (GQKD) participates in ATP binding. Glutamine 155 is a binding site for (R)-pantoate. ATP-binding positions include isoleucine 178 and 186–189 (MSSR).

It belongs to the pantothenate synthetase family. Homodimer.

The protein resides in the cytoplasm. The enzyme catalyses (R)-pantoate + beta-alanine + ATP = (R)-pantothenate + AMP + diphosphate + H(+). It functions in the pathway cofactor biosynthesis; (R)-pantothenate biosynthesis; (R)-pantothenate from (R)-pantoate and beta-alanine: step 1/1. Its function is as follows. Catalyzes the condensation of pantoate with beta-alanine in an ATP-dependent reaction via a pantoyl-adenylate intermediate. The protein is Pantothenate synthetase of Shewanella halifaxensis (strain HAW-EB4).